Here is a 29-residue protein sequence, read N- to C-terminus: Acidic phospholipase A2 Omo-E6 (29 aa).

Positions 27 and 29 each coordinate Ca(2+).

It depends on Ca(2+) as a cofactor. As to expression, expressed by the venom gland.

The protein resides in the secreted. It carries out the reaction a 1,2-diacyl-sn-glycero-3-phosphocholine + H2O = a 1-acyl-sn-glycero-3-phosphocholine + a fatty acid + H(+). In terms of biological role, snake venom phospholipase A2 (PLA2) that inhibits the ADP- and collagen-induced human platelet aggregation. Exhibits strong hydrolytic activities and prefers the anionic micelles (dPPC with deoxycholate) to the zwitterionic micelles (dPPC with Triton X-100). PLA2 catalyzes the calcium-dependent hydrolysis of the 2-acyl groups in 3-sn-phosphoglycerides. The chain is Acidic phospholipase A2 Omo-E6 from Ovophis monticola (Chinese mountain pitviper).